The following is a 90-amino-acid chain: Probable Fe(2+)-trafficking protein (90 aa).

This sequence belongs to the Fe(2+)-trafficking protein family.

Functionally, could be a mediator in iron transactions between iron acquisition and iron-requiring processes, such as synthesis and/or repair of Fe-S clusters in biosynthetic enzymes. This chain is Probable Fe(2+)-trafficking protein, found in Saccharophagus degradans (strain 2-40 / ATCC 43961 / DSM 17024).